Here is a 686-residue protein sequence, read N- to C-terminus: ATP-dependent DNA helicase RecG (686 aa).

The wedge domain stretch occupies residues 50–149 (TVIDLNQAED…GTQTQENADV (100 aa)). In terms of domain architecture, Helicase ATP-binding spans 279–439 (DLKAPIRMHR…VFGEMDVSSI (161 aa)). 292–299 (GDVGSGKT) is an ATP binding site. A DEAH box motif is present at residues 392 to 395 (DEQH). The 157-residue stretch at 462–618 (VLMQMTSELK…GFELSERDLE (157 aa)) folds into the Helicase C-terminal domain.

Belongs to the helicase family. RecG subfamily. As to quaternary structure, monomer.

The enzyme catalyses Couples ATP hydrolysis with the unwinding of duplex DNA by translocating in the 3'-5' direction.. It catalyses the reaction ATP + H2O = ADP + phosphate + H(+). Its function is as follows. Plays a critical role in recombination and DNA repair. Helps process Holliday junction intermediates to mature products by catalyzing branch migration. Has replication fork regression activity, unwinds stalled or blocked replication forks to make a HJ that can be resolved. Has a DNA unwinding activity characteristic of a DNA helicase with 3'-5' polarity. In Staphylococcus aureus (strain NCTC 8325 / PS 47), this protein is ATP-dependent DNA helicase RecG.